Consider the following 386-residue polypeptide: Homoserine O-succinyltransferase (386 aa).

The region spanning Asn-49–Leu-358 is the AB hydrolase-1 domain. Ser-156 (nucleophile) is an active-site residue. Arg-226 is a substrate binding site. Residues Asp-321 and His-354 contribute to the active site. Position 355 (Asp-355) interacts with substrate.

This sequence belongs to the AB hydrolase superfamily. MetX family. Homodimer.

Its subcellular location is the cytoplasm. It carries out the reaction L-homoserine + succinyl-CoA = O-succinyl-L-homoserine + CoA. The protein operates within amino-acid biosynthesis; L-methionine biosynthesis via de novo pathway; O-succinyl-L-homoserine from L-homoserine: step 1/1. In terms of biological role, transfers a succinyl group from succinyl-CoA to L-homoserine, forming succinyl-L-homoserine. In Acinetobacter baumannii (strain SDF), this protein is Homoserine O-succinyltransferase.